Reading from the N-terminus, the 186-residue chain is PR-toxin biosynthesis cluster protein 7 (186 aa).

The chain crosses the membrane as a helical span at residues 24-43; the sequence is LGEVTTGGVTPRGTFIFCPI.

It is found in the membrane. It functions in the pathway sesquiterpene biosynthesis. Its function is as follows. Part of the gene cluster that mediates the biosynthesis of PR-toxin, a bicyclic sesquiterpene belonging to the eremophilane class and acting as a mycotoxin. The first step of the pathway is catalyzed by the aristolochene synthase which performs the cyclization of trans,trans-farnesyl diphosphate (FPP) to the bicyclic sesquiterpene aristolochene. Following the formation of aristolochene, the non-oxygenated aristolochene is converted to the trioxygenated intermediate eremofortin B, via 7-epi-neopetasone. This conversion appears to involve three enzymes, a hydroxysterol oxidase-like enzyme, the quinone-oxidase prx3 that forms the quinone-type-structure in the bicyclic nucleus of aristolochene with the C8-oxo group and the C-3 hydroxyl group, and the P450 monooxygenase ORF6 that introduces the epoxide at the double bond between carbons 1 and 2. No monoxy or dioxy-intermediates have been reported to be released to the broth, so these three early oxidative reactions may be coupled together. Eremofortin B is further oxidized by another P450 monooxygenase, that introduces a second epoxide between carbons 7 and 11 prior to acetylation to eremofortin A by the acetyltransferase ORF8. The second epoxidation may be performed by a second P450 monooxygenase. After the acetylation step, eremofortin A is converted to eremofortin C and then to PR-toxin. First the conversion of eremofortin A to eremofortin C proceeds by oxidation of the side chain of the molecule at C-12 and is catalyzed by the short-chain oxidoreductase prx1. The cytochrome P450 monooxygenase ORF6 is probably also involved in this step. The primary alcohol formed at C-12 is finally oxidized by the short-chain alcohol dehydrogenase prx4 that forms PR-toxin. This chain is PR-toxin biosynthesis cluster protein 7, found in Penicillium roqueforti (strain FM164).